We begin with the raw amino-acid sequence, 367 residues long: Probable butyrate kinase (367 aa).

This sequence belongs to the acetokinase family.

It is found in the cytoplasm. The enzyme catalyses butanoate + ATP = butanoyl phosphate + ADP. The chain is Probable butyrate kinase from Bacillus cereus (strain Q1).